The sequence spans 213 residues: NADH-quinone oxidoreductase subunit C (213 aa).

It belongs to the complex I 30 kDa subunit family. In terms of assembly, NDH-1 is composed of 14 different subunits. Subunits NuoB, C, D, E, F, and G constitute the peripheral sector of the complex.

The protein localises to the cell inner membrane. It carries out the reaction a quinone + NADH + 5 H(+)(in) = a quinol + NAD(+) + 4 H(+)(out). NDH-1 shuttles electrons from NADH, via FMN and iron-sulfur (Fe-S) centers, to quinones in the respiratory chain. The immediate electron acceptor for the enzyme in this species is believed to be ubiquinone. Couples the redox reaction to proton translocation (for every two electrons transferred, four hydrogen ions are translocated across the cytoplasmic membrane), and thus conserves the redox energy in a proton gradient. This Rhodospirillum rubrum (strain ATCC 11170 / ATH 1.1.1 / DSM 467 / LMG 4362 / NCIMB 8255 / S1) protein is NADH-quinone oxidoreductase subunit C.